Consider the following 398-residue polypeptide: Acetate kinase (398 aa).

Residue Asn7 participates in Mg(2+) binding. Lys14 contacts ATP. Arg85 contributes to the substrate binding site. Asp142 serves as the catalytic Proton donor/acceptor. ATP-binding positions include 202–206, 277–279, and 325–329; these read HLGNG, DMR, and GIGEN. Residue Glu379 coordinates Mg(2+).

The protein belongs to the acetokinase family. Homodimer. Mg(2+) is required as a cofactor. It depends on Mn(2+) as a cofactor.

Its subcellular location is the cytoplasm. It carries out the reaction acetate + ATP = acetyl phosphate + ADP. It functions in the pathway metabolic intermediate biosynthesis; acetyl-CoA biosynthesis; acetyl-CoA from acetate: step 1/2. Its function is as follows. Catalyzes the formation of acetyl phosphate from acetate and ATP. Can also catalyze the reverse reaction. The sequence is that of Acetate kinase from Deinococcus radiodurans (strain ATCC 13939 / DSM 20539 / JCM 16871 / CCUG 27074 / LMG 4051 / NBRC 15346 / NCIMB 9279 / VKM B-1422 / R1).